We begin with the raw amino-acid sequence, 679 residues long: Single-strand DNA endonuclease ASTE1 (679 aa).

The segment at 351-400 (TILPTQVENMQQPNAHRISQPIRQIIYGLLLNASPHLDKTSWNALPPQPL) is interaction with SHLD2. The tract at residues 625–645 (RSNSKKKRQKKQNTSCSKNRG) is disordered. Residues 626–635 (SNSKKKRQKK) are compositionally biased toward basic residues.

It belongs to the asteroid family. In terms of assembly, interacts with SHLD1, SHLD2, SHLD3, RIF1 and MAD2L2/REV7.

Its function is as follows. Structure-specific DNA endonuclease that specifically cleaves single-stranded DNA and 3' overhang DNA. Contributes to the control of DNA double-strand break repair choice by antagonizing BRCA1-dependent homologous recombination (HR) and promoting non-homologous end-joining (NHEJ). Recruited to the single-stranded DNA ends by SHLD2 and cleaves the 3' exposed DNA ends, therefore inhibiting DNA end resection (necessary for HR) and promoting DNA end protection (necessary for NHEJ). The polypeptide is Single-strand DNA endonuclease ASTE1 (ASTE1) (Pongo abelii (Sumatran orangutan)).